The following is a 555-amino-acid chain: Glucose-6-phosphate isomerase (555 aa).

Residue E355 is the Proton donor of the active site. Active-site residues include H386 and K514.

The protein belongs to the GPI family.

Its subcellular location is the cytoplasm. It catalyses the reaction alpha-D-glucose 6-phosphate = beta-D-fructose 6-phosphate. Its pathway is carbohydrate biosynthesis; gluconeogenesis. It functions in the pathway carbohydrate degradation; glycolysis; D-glyceraldehyde 3-phosphate and glycerone phosphate from D-glucose: step 2/4. In terms of biological role, catalyzes the reversible isomerization of glucose-6-phosphate to fructose-6-phosphate. The chain is Glucose-6-phosphate isomerase from Buchnera aphidicola subsp. Schizaphis graminum (strain Sg).